The chain runs to 136 residues: MFGSVGWGELLVLLIVGLVVLGPERLPGAIRWTTESLRKVRDYASGATASLREELGPEFDDVRKPLAELQKLRGMTPRAVITKHLLDGDDSVFDSLTRPLDDVKKAVTEPAPTPIVNPELAKPAEPGPTRYDADAT.

The chain crosses the membrane as a helical span at residues 2 to 22; it reads FGSVGWGELLVLLIVGLVVLG. The tract at residues 107–136 is disordered; the sequence is VTEPAPTPIVNPELAKPAEPGPTRYDADAT.

This sequence belongs to the TatB family. The Tat system comprises two distinct complexes: a TatABC complex, containing multiple copies of TatA, TatB and TatC subunits, and a separate TatA complex, containing only TatA subunits. Substrates initially bind to the TatABC complex, which probably triggers association of the separate TatA complex to form the active translocon.

The protein resides in the cell membrane. Its function is as follows. Part of the twin-arginine translocation (Tat) system that transports large folded proteins containing a characteristic twin-arginine motif in their signal peptide across membranes. Together with TatC, TatB is part of a receptor directly interacting with Tat signal peptides. TatB may form an oligomeric binding site that transiently accommodates folded Tat precursor proteins before their translocation. The protein is Sec-independent protein translocase protein TatB of Mycobacteroides abscessus (strain ATCC 19977 / DSM 44196 / CCUG 20993 / CIP 104536 / JCM 13569 / NCTC 13031 / TMC 1543 / L948) (Mycobacterium abscessus).